Here is an 881-residue protein sequence, read N- to C-terminus: Alanine--tRNA ligase (881 aa).

H564, H568, C673, and H677 together coordinate Zn(2+). The interval 848–867 (GQGGGGRPDMAQAGGPDGDK) is disordered.

The protein belongs to the class-II aminoacyl-tRNA synthetase family. Zn(2+) is required as a cofactor.

The protein resides in the cytoplasm. The catalysed reaction is tRNA(Ala) + L-alanine + ATP = L-alanyl-tRNA(Ala) + AMP + diphosphate. Its function is as follows. Catalyzes the attachment of alanine to tRNA(Ala) in a two-step reaction: alanine is first activated by ATP to form Ala-AMP and then transferred to the acceptor end of tRNA(Ala). Also edits incorrectly charged Ser-tRNA(Ala) and Gly-tRNA(Ala) via its editing domain. This Hyphomonas neptunium (strain ATCC 15444) protein is Alanine--tRNA ligase.